The chain runs to 183 residues: MELVVIAKPYANAIFELAQQDKSYLQWKMVLDAGAQLLIDEQMCKFIAFPNVLKQDKLSVIKELLKSILARELSGHEVTFIGILLNNNRINALPSIATLFESLINTTNDAKMFNVISAYQLSELEKKQIVRDLTNQYNKVVNIDAVIDKDLVGGVIIKDGDKVIDMSIKARVNELELRLSKTH.

The protein belongs to the ATPase delta chain family. F-type ATPases have 2 components, F(1) - the catalytic core - and F(0) - the membrane proton channel. F(1) has five subunits: alpha(3), beta(3), gamma(1), delta(1), epsilon(1). F(0) has three main subunits: a(1), b(2) and c(10-14). The alpha and beta chains form an alternating ring which encloses part of the gamma chain. F(1) is attached to F(0) by a central stalk formed by the gamma and epsilon chains, while a peripheral stalk is formed by the delta and b chains.

It localises to the cell inner membrane. In terms of biological role, f(1)F(0) ATP synthase produces ATP from ADP in the presence of a proton or sodium gradient. F-type ATPases consist of two structural domains, F(1) containing the extramembraneous catalytic core and F(0) containing the membrane proton channel, linked together by a central stalk and a peripheral stalk. During catalysis, ATP synthesis in the catalytic domain of F(1) is coupled via a rotary mechanism of the central stalk subunits to proton translocation. Its function is as follows. This protein is part of the stalk that links CF(0) to CF(1). It either transmits conformational changes from CF(0) to CF(1) or is implicated in proton conduction. In Ruthia magnifica subsp. Calyptogena magnifica, this protein is ATP synthase subunit delta.